Consider the following 1200-residue polypeptide: MNLDKALVLRTCANNMADHCGLIWPASGTVESRYWQSTRRHENGLVGLLWGAGTSAFLSVHADARWIVCEVAVADIISLEEPGMVKFPRAEVVHVGDRISASHFISARQADPASTSTSTLTPMPTAIPTPMPAVASVTLPVAEQARHEVFDVASVSAAAAPVNTLPVTTPQNVQTATYGSTLSGDNHSRLIAGYGSNETAGNHSDLIAGYGSTGTAGSDSWLVAGYGSTQTAGGDSALTAGYGSTQTAREGSNLTAGYGSTGTAGSDSSLIAGYGSTQTSGGDSSLTAGYGSTQTAQEGSNLTAGYGSTGTAGSDSSLIAGYGSTQTSGGDSSLTAGYGSTQTAQEGSNLTAGYGSTGTAGVDSSLIAGYGSTQTSGSDSALTAGYGSTQTAQEGSNLTAGYGSTGTAGSDSSLIAGYGSTQTSGSDSSLTAGYGSTQTAQEGSILTAGYGSTGTAGVDSSLIAGYGSTQTSGSDSALTAGYGSTQTAQEGSNLTAGYGSTGTAGADSSLIAGYGSTQTSGSESSLTAGYGSTQTAREGSTLTAGYGSTGTAGADSSLIAGYGSTQTSGSESSLTAGYGSTQTAQQGSVLTSGYGSTQTAGAASNLTTGYGSTGTAGHESFIIAGYGSTQTAGHKSILTAGYGSTQTARDGSDLIAGYGSTGTAGSGSSLIAGYGSTQTASYRSMLTAGYGSTQTAREHSDLVTGYGSTSTAGSNSSLIAGYGSTQTAGFKSILTAGYGSTQTAQERTSLVAGYGSTSTAGYSSSLIAGYGSTQTAGYESTLTAGYGSTQTAQENSSLTTGYGSTSTAGYSSSLIAGYGSTQTAGYESTLTAGYGSTQTAQERSDLVTGYGSTSTAGYASSLIAGYGSTQTAGYESTLTAGYGSTQTAQENSSLTTGYGSTSTAGFASSLISGYGSTQTAGYKSTLTAGYGSTQTAEYGSSLTAGYGSTATAGQDSSLIAGYGSSLTSGIRSFLTAGYGSTLIAGLRSVLIAGYGSSLTSGVRSTLTAGYGSNQIASYGSSLIAGHESIQVAGNKSMLIAGKGSSQTAGFRSTLIAGAGSVQLAGDRSRLIAGADSNQTAGDRSKLLAGNNSYLTAGDRSKLTGGHDCTLMAGDQSRLTAGKNSVLTAGARSKLIGSEGSTLSAGEDSILIFRLWDGKRYRQLVARTGENGVEADIPYYVNEDDDIVDKPDEDDDWIEVK.

Positions 176–1151 (ATYGSTLSGD…LSAGEDSILI (976 aa)) are octapeptide periodicity.

This sequence belongs to the bacterial ice nucleation protein family.

Its subcellular location is the cell outer membrane. Functionally, ice nucleation proteins enable bacteria to nucleate crystallization in supercooled water. The chain is Ice nucleation protein (inaZ) from Pseudomonas syringae pv. syringae.